Here is a 366-residue protein sequence, read N- to C-terminus: Ubiquitin carboxyl-terminal hydrolase 46 (366 aa).

One can recognise a USP domain in the interval 35-365; it reads FGLVNFGNTC…SGYILFYQSR (331 aa). Residue Cys44 is the Nucleophile of the active site. 4 residues coordinate Zn(2+): Cys182, Cys185, Cys229, and Cys232. The active-site Proton acceptor is His313.

This sequence belongs to the peptidase C19 family. USP12/USP46 subfamily. In terms of assembly, interacts with WDR48. Interacts with WDR20. Interacts with DMWD. Component of the USP46/WDR20/WDR48 deubiquitinating complex. As to expression, detected in lung and spleen, and at lower levels in brain, kidney, testis and liver.

It localises to the cytoplasm. The enzyme catalyses Thiol-dependent hydrolysis of ester, thioester, amide, peptide and isopeptide bonds formed by the C-terminal Gly of ubiquitin (a 76-residue protein attached to proteins as an intracellular targeting signal).. In terms of biological role, deubiquitinating enzyme that plays a role in behavior, possibly by regulating GABA action. May act by mediating the deubiquitination of GAD1/GAD67. Has almost no deubiquitinating activity by itself and requires the interaction with WDR48 to have a high activity. Not involved in deubiquitination of monoubiquitinated FANCD2. This Rattus norvegicus (Rat) protein is Ubiquitin carboxyl-terminal hydrolase 46.